The following is a 142-amino-acid chain: MKGLVRLLTVFSLLLGCWGWLGTTQIAQAGSLQSFLVPQIPVLAIERQNRADAKLATEFGEKIDLNNTNVRAFQQYPGLYPTLAKKIIQNAPYGKVEDVLNLPGLSDGQKQLLQSNFDKFTVTELEPAFNEGDDRFNNGIYR.

The N-terminal stretch at 1 to 29 is a signal peptide; sequence MKGLVRLLTVFSLLLGCWGWLGTTQIAQA.

This sequence belongs to the PsbU family. As to quaternary structure, PSII is composed of 1 copy each of membrane proteins PsbA, PsbB, PsbC, PsbD, PsbE, PsbF, PsbH, PsbI, PsbJ, PsbK, PsbL, PsbM, PsbT, PsbX, PsbY, PsbZ, Psb30/Ycf12, peripheral proteins PsbO, CyanoQ (PsbQ), PsbU, PsbV and a large number of cofactors. It forms dimeric complexes.

The protein localises to the cellular thylakoid membrane. One of the extrinsic, lumenal subunits of photosystem II (PSII). PSII is a light-driven water plastoquinone oxidoreductase, using light energy to abstract electrons from H(2)O, generating a proton gradient subsequently used for ATP formation. The extrinsic proteins stabilize the structure of photosystem II oxygen-evolving complex (OEC), the ion environment of oxygen evolution and protect the OEC against heat-induced inactivation. In Nostoc sp. (strain PCC 7120 / SAG 25.82 / UTEX 2576), this protein is Photosystem II extrinsic protein U.